We begin with the raw amino-acid sequence, 269 residues long: Aquaporin-7 (269 aa).

The Cytoplasmic portion of the chain corresponds to 1 to 20 (MAGSVLENIQSVLQKTWVRE). The residue at position 4 (Ser4) is a Phosphoserine. The helical transmembrane segment at 21–38 (FLAEFLSTYVLMVFGLGS) threads the bilayer. Residues 39–51 (VAHMVLGERLGSY) are Extracellular-facing. A helical membrane pass occupies residues 52-69 (LGVNLGFGFGVTMGIHVA). Over 70 to 73 (GGIS) the chain is Cytoplasmic. An intramembrane region (discontinuously helical) is located at residues 74 to 87 (GAHMNAAVTFTNCA). The NPA 1 motif lies at 78 to 80 (NAA). Over 88-95 (LGRMAWKK) the chain is Cytoplasmic. The helical transmembrane segment at 96–116 (FPIYVLGQFLGSFLAAATTYL) threads the bilayer. Residues 117 to 151 (IFYGAINHYAGGELLVTGPKSTANIFATYLPEHMT) lie on the Extracellular side of the membrane. A helical transmembrane segment spans residues 152-172 (LWRGFVDEVFVTGMLQLCIFA). Topologically, residues 173–184 (ITDKLNSPALQG) are cytoplasmic. Residues 185–201 (TEPLMIGILVCVLGVSL) form a helical membrane-spanning segment. Residues 202-205 (GMNT) lie on the Extracellular side of the membrane. The segment at residues 206–219 (GYAINPSRDLPPRF) is an intramembrane region (discontinuously helical). Residues 210–212 (NPS) carry the NPA 2 motif. Over 220–237 (FTFIAGWGKKVFSAGNNW) the chain is Extracellular. A helical membrane pass occupies residues 238-259 (WWVPVVAPLLGAYLGGIVYLGL). Over 260–269 (IHAGIPPQGS) the chain is Cytoplasmic.

The protein belongs to the MIP/aquaporin (TC 1.A.8) family. In terms of assembly, homotetramer; each monomer provides an independent glycerol/water pore. Two homotetramers on opposing membranes can dimerize, forming a cell-cell junction. Interacts with PLIN1. Post-translationally, phosphorylation by PKA could prevent the interaction with PLIN1. Detected in heart, kidney and testis.

It is found in the cell membrane. It localises to the cytoplasmic vesicle membrane. Its subcellular location is the lipid droplet. It carries out the reaction glycerol(in) = glycerol(out). The catalysed reaction is H2O(in) = H2O(out). The enzyme catalyses urea(in) = urea(out). Its activity is regulated as follows. Glycerol transport is regulated by pH, with the porin being permeable to glycerol at pH 7.4 but not at pH 5.5. Water permeability, however, is not influenced by pH. Not inhibited by mercury ions. Aquaglyceroporins form homotetrameric transmembrane channels, with each monomer independently mediating glycerol and water transport across the plasma membrane along their osmotic gradient. Could also be permeable to urea. Mediates the efflux of glycerol, formed upon triglyceride hydrolysis, to avoid its accumulation in adipocytes and to make it available to other tissues. In the kidney, mediates the reabsorption of glycerol, preventing its loss in urine, again participating to energy homeostasis. In pancreatic beta cells, it also mediates the efflux of glycerol, regulating its intracellular levels. The polypeptide is Aquaporin-7 (Rattus norvegicus (Rat)).